A 310-amino-acid polypeptide reads, in one-letter code: p-hydroxybenzoic acid efflux pump subunit AaeA (310 aa).

The chain crosses the membrane as a helical span at residues 12-32 (AITLVLVILAFIAIFRAWVYY).

This sequence belongs to the membrane fusion protein (MFP) (TC 8.A.1) family.

It is found in the cell inner membrane. Functionally, forms an efflux pump with AaeB. In Citrobacter koseri (strain ATCC BAA-895 / CDC 4225-83 / SGSC4696), this protein is p-hydroxybenzoic acid efflux pump subunit AaeA.